Reading from the N-terminus, the 398-residue chain is ORC1-type DNA replication protein 1 (398 aa).

ATP-binding positions include 67 to 71 (TGKTA), Tyr208, and Arg220.

The protein belongs to the CDC6/cdc18 family.

Functionally, involved in regulation of DNA replication. The polypeptide is ORC1-type DNA replication protein 1 (cdc6-1) (Sulfurisphaera tokodaii (strain DSM 16993 / JCM 10545 / NBRC 100140 / 7) (Sulfolobus tokodaii)).